Reading from the N-terminus, the 237-residue chain is 1-(5-phosphoribosyl)-5-[(5-phosphoribosylamino)methylideneamino] imidazole-4-carboxamide isomerase (237 aa).

Catalysis depends on Asp8, which acts as the Proton acceptor. Asp130 acts as the Proton donor in catalysis.

The protein belongs to the HisA/HisF family.

The protein localises to the cytoplasm. It catalyses the reaction 1-(5-phospho-beta-D-ribosyl)-5-[(5-phospho-beta-D-ribosylamino)methylideneamino]imidazole-4-carboxamide = 5-[(5-phospho-1-deoxy-D-ribulos-1-ylimino)methylamino]-1-(5-phospho-beta-D-ribosyl)imidazole-4-carboxamide. The protein operates within amino-acid biosynthesis; L-histidine biosynthesis; L-histidine from 5-phospho-alpha-D-ribose 1-diphosphate: step 4/9. This chain is 1-(5-phosphoribosyl)-5-[(5-phosphoribosylamino)methylideneamino] imidazole-4-carboxamide isomerase, found in Halothermothrix orenii (strain H 168 / OCM 544 / DSM 9562).